The primary structure comprises 71 residues: Conotoxin AbVIG (71 aa).

A signal peptide spans 1-17; it reads VLIIAVLFLTACQLTTA. A propeptide spanning residues 18–40 is cleaved from the precursor; sequence ETSSRGKQKHRALRSTDKNSRMT. 3 cysteine pairs are disulfide-bonded: cysteine 43–cysteine 57, cysteine 50–cysteine 61, and cysteine 56–cysteine 68.

Belongs to the conotoxin O1 superfamily. Expressed by the venom duct.

It localises to the secreted. In Conus abbreviatus (Abbreviated cone), this protein is Conotoxin AbVIG.